The chain runs to 223 residues: ATP phosphoribosyltransferase (223 aa).

It belongs to the ATP phosphoribosyltransferase family. Short subfamily. Heteromultimer composed of HisG and HisZ subunits.

It is found in the cytoplasm. It catalyses the reaction 1-(5-phospho-beta-D-ribosyl)-ATP + diphosphate = 5-phospho-alpha-D-ribose 1-diphosphate + ATP. The protein operates within amino-acid biosynthesis; L-histidine biosynthesis; L-histidine from 5-phospho-alpha-D-ribose 1-diphosphate: step 1/9. In terms of biological role, catalyzes the condensation of ATP and 5-phosphoribose 1-diphosphate to form N'-(5'-phosphoribosyl)-ATP (PR-ATP). Has a crucial role in the pathway because the rate of histidine biosynthesis seems to be controlled primarily by regulation of HisG enzymatic activity. The chain is ATP phosphoribosyltransferase from Desulfitobacterium hafniense (strain Y51).